A 390-amino-acid chain; its full sequence is Flap endonuclease 1-1 (390 aa).

The interval 1-108 (MGIHQLMQFL…GELARRKKLK (108 aa)) is N-domain. D34 contributes to the Mg(2+) binding site. R74 is a binding site for DNA. Mg(2+) is bound by residues D90, E162, E164, D183, and D185. The tract at residues 126 to 254 (QALLQHQRTT…GTAYKLIKEF (129 aa)) is I-domain. E162 contacts DNA. Positions 232 and 234 each coordinate DNA. Mg(2+) is bound at residue D234. Positions 348-356 (FQSRLENFF) are interaction with PCNA. The interval 359-390 (TTKIIHPNNSKAKGKANKKNEQTQKSGGKKKI) is disordered.

This sequence belongs to the XPG/RAD2 endonuclease family. FEN1 subfamily. As to quaternary structure, interacts with PCNA. Three molecules of FEN1 bind to one PCNA trimer with each molecule binding to one PCNA monomer. PCNA stimulates the nuclease activity without altering cleavage specificity. Requires Mg(2+) as cofactor. Phosphorylated. Phosphorylation upon DNA damage induces relocalization to the nuclear plasma.

It localises to the nucleus. The protein localises to the nucleolus. Its subcellular location is the nucleoplasm. The protein resides in the mitochondrion. Its function is as follows. Structure-specific nuclease with 5'-flap endonuclease and 5'-3' exonuclease activities involved in DNA replication and repair. During DNA replication, cleaves the 5'-overhanging flap structure that is generated by displacement synthesis when DNA polymerase encounters the 5'-end of a downstream Okazaki fragment. It enters the flap from the 5'-end and then tracks to cleave the flap base, leaving a nick for ligation. Also involved in the long patch base excision repair (LP-BER) pathway, by cleaving within the apurinic/apyrimidinic (AP) site-terminated flap. Acts as a genome stabilization factor that prevents flaps from equilibrating into structures that lead to duplications and deletions. Also possesses 5'-3' exonuclease activity on nicked or gapped double-stranded DNA, and exhibits RNase H activity. Also involved in replication and repair of rDNA and in repairing mitochondrial DNA. The sequence is that of Flap endonuclease 1-1 from Paramecium tetraurelia.